A 241-amino-acid chain; its full sequence is Probable transcriptional regulatory protein Maqu_2154 (241 aa).

Belongs to the TACO1 family.

The protein localises to the cytoplasm. This is Probable transcriptional regulatory protein Maqu_2154 from Marinobacter nauticus (strain ATCC 700491 / DSM 11845 / VT8) (Marinobacter aquaeolei).